Consider the following 1499-residue polypeptide: MPRKQRVVTTPSPPTSDEDEDMDFGSTSQQQQQQPTRNNDGLSGFKSITEIIAEADNNIPSEQIDKDIDSFSSYSDISDWRGIPKFFPSLSSLSRRASTYENWENRFKVVDYLVSCSGALKDSVSDYVADYFEKNESGEDHSVDVELVHAVSMFVILTQRLTVQLQLYVSKSIASANQQAKRGTGRGGRQVDLDDDIVKWKDIQRHRMINCLLELLELRVDTVAGTKKKAIQYVFAPDVMEKDFLLRFLDTVVQLLEDPENMARSSQQWISHYFRILKVLSADYGMTKDVANCLFTALSHSYLEAANTFPFIEPLVTLMKENGEGSGRIYQPLRNVLQLVICRVGNLYAGERAEKPPPKAFCMMVQSLAINVHDLMLQDITHVYRLLQNQHVNVRMSTLHALADMFSSSYLSQSLCDTFASRRLKREGIFKRLLAHTNDEATNVRSKAVSLLRNIMENRRIPEEFESCGLLSIVGSRLNDKSVQVRKSAIQFLTTFLDNNRHGHDFNREMHQLKLNAKCSELRNAEEPQSKAIQGAENAFRQNLFTLTAGVRVEVYDIFRRRYRVEPERSITDILTGLFSPGSGNRLVRYYVAQENFPFRDRIPSLRERRSDDMEDDDDDTVSLEDDDMTSLVSEVVKWVVAQAEEDYVTFKVQLTQMDDDQLLENEQEARDRNNQIMQLRAQVQQLINKMSIEQELSRCVTIALRCVLNGETAEIKEGIRFLTRCKLFEITGADDAIRSMCSLVWRPSADILNELIEAAEDMFISRLDGNEKASERDSSTVENLMKAMNGVTEKDRPSVEEVIYLLAATELVHVDSDKNKVPRKRRPIEANVINKLWMIALDMSHGINSRKIDALRILYPISRSERGIAEARSRLRVVQKKLMDPELAVDALRIISILGTPTKLENEQDAYSRPLFKIHQDDSLWKSIEKLFFYEIMKADDNPDRDWFGVIRLTITTILSLSMDVNVMLPKLASHFVYRTKRISDFFLFYCDQVDDATDDTRKKMAQRRREYWALTYCRVMEKLMAFIGEVAVQLNAYIQVTIPKLHTRYVSKMVDAEKNDANIREEPVRFLSDLEKSVAQRKTIFTVPQDTTPGATSNDLHHLVSVMCDKRLFVPNKLMGRLLPIVVYGMRCKIMPTRIRHAATVAYGKMMPLSAEISAFAAPSFFSAMTKSSSILLRCNLVAACCDFAFAQPTLFELFAQSLFRMSQDESPLARESTILVLSHLMSNDMIQTRGVLSEAARCICDPTRAVRDVAQSFFKELNSRTDTIIQLLPEFLYHLSNGNERMSFKSYKTVFEFLIQLLKDKPKASADSMIDRVCIKFSNTDMNDSETPKYLLVALAKFVQNDGGLHRLQDNWRHWSKFMCHPSVAKEYRMMVEHMHSTSKNDEFKSQCVELIDNINKIESEGLRKEDVAIGSSITKNKGRAKKNPTTMSGSSRTTSRAANSRRRAPPPAQSDEDDSDSDDAPAAPRSAARRKAKKSAVADDDSDSDEFMLDD.

2 disordered regions span residues 1–43 (MPRK…DGLS) and 1421–1499 (ITKN…MLDD). The segment covering 1432–1446 (PTTMSGSSRTTSRAA) has biased composition (low complexity). 2 stretches are compositionally biased toward acidic residues: residues 1458–1467 (SDEDDSDSDD) and 1486–1499 (ADDD…MLDD).

This sequence belongs to the CND1 (condensin subunit 1) family. As to quaternary structure, component of the condensin I complex, which contains the mix-1/SMC2 and smc-4/SMC4 heterodimer, and three non SMC subunits that probably regulate the complex: dpy-26, capg-1 and dpy-28. Within the complex, interacts with dpy-26 and smc-4. Component of the dosage compensation complex, which consist of the condensin I like components mix-1/SMC2 and dpy-27/SMC4, and the three non SMC subunits dpy-26, capg-1 and dpy-28. Within the complex, interacts with mix-1, dpy-27, dpy-26 and capg-1. Interacts with smcl-1. Sumoylated. Sumoylated in the context of the dosage compensation complex but not in the condensin I complex. Sumoylation is important for assembly of the dosage compensation complex and its robust binding to the X chromosome. In terms of tissue distribution, expressed in somatic and germline tissues (at protein level).

Its subcellular location is the nucleus. It localises to the chromosome. Its function is as follows. Required for both chromosome condensation and segregation during mitosis and meiosis and X-chromosome dosage compensation depending on its binding partners. Regulatory subunit of the condensin I complex, a complex required for conversion of interphase chromatin into mitotic-like condense chromosomes. The condensin I complex probably introduces positive supercoils into relaxed DNA in the presence of type I topoisomerases and converts nicked DNA into positive knotted forms in the presence of type II topoisomerases. The condensin I complex function is required for proper chromosome segregation in mitosis and meiosis. As a member of the condensin I complex, further controls the crossover number and distribution in meiosis by restricting double strand break formation, possibly by influencing higher-order chromosome structure. Plays a role in robust cytokinesis upon presence of chromatin obstructions. Also a member of the condensin I-like dosage compensation complex that associates specifically with hermaphrodite X chromosomes to reduce their gene transcription during interphase, possibly through chromatin reorganization. The polypeptide is Condensin complex subunit 1 (Caenorhabditis elegans).